Consider the following 985-residue polypeptide: Regulator of telomere elongation helicase 1 homolog (985 aa).

A Helicase ATP-binding domain is found at 7–303 (AGIPVHFPFE…QDMGGDEPKD (297 aa)). 42–49 (SPTGTGKT) is a binding site for ATP. 4 residues coordinate [4Fe-4S] cluster: Cys146, Cys164, Cys173, and Cys209. The short motif at 252–255 (DEAH) is the DEAH box element. Residues 858–884 (GSSGMVKIHKRERSSPTQPESSSQVSK) are disordered. The segment covering 872-882 (SPTQPESSSQV) has biased composition (polar residues). Thr874 bears the Phosphothreonine mark.

Belongs to the helicase family. RAD3/XPD subfamily.

Its subcellular location is the nucleus. It carries out the reaction ATP + H2O = ADP + phosphate + H(+). In terms of biological role, a probable ATP-dependent DNA helicase implicated in DNA repair and the maintenance of genomic stability. Acts as an anti-recombinase to counteract toxic recombination and limit crossover during meiosis. Regulates meiotic recombination and crossover homeostasis by physically dissociating strand invasion events and thereby promotes noncrossover repair by meiotic synthesis dependent strand annealing (SDSA) as well as disassembly of D loop recombination intermediates. The chain is Regulator of telomere elongation helicase 1 homolog from Drosophila yakuba (Fruit fly).